Here is a 94-residue protein sequence, read N- to C-terminus: Neutrophil defensin 3 (94 aa).

Positions 1–19 are cleaved as a signal peptide; the sequence is MRTLAILAAILLVALQAQA. The propeptide occupies 20–38; that stretch reads EPLQARADEVAAAPEQIAA. 3 disulfides stabilise this stretch: Cys66-Cys94, Cys68-Cys83, and Cys73-Cys93.

Belongs to the alpha-defensin family. Dimer. In terms of assembly, (Microbial infection) Interacts with herpes virus 1 HHV-1 envelope glycoprotein B; this interaction inhibits viral infection.

It localises to the secreted. Effector molecule of the innate immune system that acts via antibiotic-like properties against a broad array of infectious agents including bacteria, fungi, and viruses. Possesses the ability to neutralize bacterial toxins such as B.anthracis lethal factor, Clostridium difficile cytotoxin B as well as leukocidin produced by Staphylococcus aureus. Also blocks herpes simplex virus infection by interacting with envelope glycoprotein B and thus preventing its binding to heparan sulfate, the receptor for attachment. In Homo sapiens (Human), this protein is Neutrophil defensin 3 (DEFA3).